Reading from the N-terminus, the 180-residue chain is Large ribosomal subunit protein uL5 (180 aa).

The protein belongs to the universal ribosomal protein uL5 family. As to quaternary structure, part of the 50S ribosomal subunit; part of the 5S rRNA/L5/L18/L25 subcomplex. Contacts the 5S rRNA and the P site tRNA. Forms a bridge to the 30S subunit in the 70S ribosome.

Functionally, this is one of the proteins that bind and probably mediate the attachment of the 5S RNA into the large ribosomal subunit, where it forms part of the central protuberance. In the 70S ribosome it contacts protein S13 of the 30S subunit (bridge B1b), connecting the 2 subunits; this bridge is implicated in subunit movement. Contacts the P site tRNA; the 5S rRNA and some of its associated proteins might help stabilize positioning of ribosome-bound tRNAs. This is Large ribosomal subunit protein uL5 from Clostridium acetobutylicum (strain ATCC 824 / DSM 792 / JCM 1419 / IAM 19013 / LMG 5710 / NBRC 13948 / NRRL B-527 / VKM B-1787 / 2291 / W).